Consider the following 451-residue polypeptide: Tubulin gamma-2 chain (451 aa).

Ser131 carries the phosphoserine; by BRSK1 modification. Residue 142–148 (AGGTGSG) coordinates GTP.

The protein belongs to the tubulin family. Component of the gamma-tubulin ring complex (gTuRC) consisting of TUBGCP2, TUBGCP3, TUBGCP4, TUBGCP5 and TUBGCP6 and gamma-tubulin TUBG1 or TUBG2. TUBGCP2, TUBGCP3, TUBGCP4, TUBGCP5 and TUBGCP6 assemble in a 5:5:2:1:1 stoichiometry; each is associated with a gamma-tubulin, thereby arranging 14 gamma-tubulins in a helical manner. Gamma-tubulin at the first position is blocked by TUBGCP3 at the last position, allowing 13 protafilaments to grow into a microtubule. Interacts with alpha-beta tubulin heterodimers; the interaction allows microtubules to nucleate from the gTuRC. In terms of processing, phosphorylation at Ser-131 by BRSK1 regulates centrosome duplication, possibly by mediating relocation of gamma-tubulin and its associated proteins from the cytoplasm to the centrosome.

It localises to the cytoplasm. The protein localises to the cytoskeleton. It is found in the microtubule organizing center. Its subcellular location is the centrosome. In terms of biological role, tubulin is the major constituent of microtubules, protein filaments consisting of alpha- and beta-tubulin heterodimers. Gamma-tubulin is a key component of the gamma-tubulin ring complex (gTuRC) which mediates microtubule nucleation. The gTuRC regulates the minus-end nucleation of alpha-beta tubulin heterodimers that grow into microtubule protafilaments, a critical step in centrosome duplication and spindle formation. This Mus musculus (Mouse) protein is Tubulin gamma-2 chain (Tubg2).